Reading from the N-terminus, the 355-residue chain is Uroporphyrinogen decarboxylase (355 aa).

Residues 36 to 40, aspartate 85, tyrosine 160, serine 215, and histidine 334 each bind substrate; that span reads RQAGR.

Belongs to the uroporphyrinogen decarboxylase family. Homodimer.

The protein localises to the cytoplasm. It catalyses the reaction uroporphyrinogen III + 4 H(+) = coproporphyrinogen III + 4 CO2. Its pathway is porphyrin-containing compound metabolism; protoporphyrin-IX biosynthesis; coproporphyrinogen-III from 5-aminolevulinate: step 4/4. Its function is as follows. Catalyzes the decarboxylation of four acetate groups of uroporphyrinogen-III to yield coproporphyrinogen-III. The sequence is that of Uroporphyrinogen decarboxylase from Rhodococcus erythropolis (strain PR4 / NBRC 100887).